A 142-amino-acid chain; its full sequence is Large ribosomal subunit protein uL13 (142 aa).

This sequence belongs to the universal ribosomal protein uL13 family. In terms of assembly, part of the 50S ribosomal subunit.

This protein is one of the early assembly proteins of the 50S ribosomal subunit, although it is not seen to bind rRNA by itself. It is important during the early stages of 50S assembly. In Vesicomyosocius okutanii subsp. Calyptogena okutanii (strain HA), this protein is Large ribosomal subunit protein uL13.